A 263-amino-acid chain; its full sequence is MALQIPSLLLLAAVVVLMVLSSPGTEGGDSERHFVVQFQPFCYFTNGTQRIRYVTRYIYNREEYLRFDSDVGEYRAVTELGRPDAEYYNKQYLERTRAELDTVCRYNYEETEVPTSLRRLEQPNVVISLSRTEALNHHNTLVCSVTDFYPAKIKVRWFRNGQEETVGVSSTQLIRNGDWTFQVLVMLEMTPRRGEVYTCHVEHPSLKSPITVEWRAQSESARSKMLSGIGGCVLGVIFLGLGLFIRHRSQKGPRGPPPAGLLQ.

Positions 1–27 are cleaved as a signal peptide; the sequence is MALQIPSLLLLAAVVVLMVLSSPGTEG. Positions 28-120 are beta-1; that stretch reads GDSERHFVVQ…TEVPTSLRRL (93 aa). The Extracellular segment spans residues 28 to 224; the sequence is GDSERHFVVQ…RAQSESARSK (197 aa). Cystine bridges form between C42–C104 and C143–C199. N-linked (GlcNAc...) asparagine glycosylation is present at N46. The beta-2 stretch occupies residues 121-214; that stretch reads EQPNVVISLS…SLKSPITVEW (94 aa). Positions 123–211 constitute an Ig-like C1-type domain; it reads PNVVISLSRT…EHPSLKSPIT (89 aa). The tract at residues 215-224 is connecting peptide; that stretch reads RAQSESARSK. Residues 225 to 245 traverse the membrane as a helical segment; the sequence is MLSGIGGCVLGVIFLGLGLFI. Over 246–263 the chain is Cytoplasmic; sequence RHRSQKGPRGPPPAGLLQ.

This sequence belongs to the MHC class II family.

The protein localises to the membrane. This is H-2 class II histocompatibility antigen, A-U beta chain from Mus musculus (Mouse).